The following is a 961-amino-acid chain: Glycine dehydrogenase (decarboxylating) (961 aa).

The residue at position 709 (Lys-709) is an N6-(pyridoxal phosphate)lysine.

It belongs to the GcvP family. In terms of assembly, the glycine cleavage system is composed of four proteins: P, T, L and H. Requires pyridoxal 5'-phosphate as cofactor.

It catalyses the reaction N(6)-[(R)-lipoyl]-L-lysyl-[glycine-cleavage complex H protein] + glycine + H(+) = N(6)-[(R)-S(8)-aminomethyldihydrolipoyl]-L-lysyl-[glycine-cleavage complex H protein] + CO2. In terms of biological role, the glycine cleavage system catalyzes the degradation of glycine. The P protein binds the alpha-amino group of glycine through its pyridoxal phosphate cofactor; CO(2) is released and the remaining methylamine moiety is then transferred to the lipoamide cofactor of the H protein. This is Glycine dehydrogenase (decarboxylating) from Streptomyces griseus subsp. griseus (strain JCM 4626 / CBS 651.72 / NBRC 13350 / KCC S-0626 / ISP 5235).